The following is a 349-amino-acid chain: D-arabinitol dehydrogenase 1 (349 aa).

7 residues coordinate Zn(2+): cysteine 46, histidine 67, cysteine 97, cysteine 100, cysteine 103, cysteine 111, and glutamate 151.

The protein belongs to the zinc-containing alcohol dehydrogenase family. Requires Zn(2+) as cofactor.

The protein localises to the cell projection. It catalyses the reaction D-arabinitol + NADP(+) = D-xylulose + NADPH + H(+). The enzyme catalyses D-arabinitol + NADP(+) = D-ribulose + NADPH + H(+). In terms of biological role, D-arabinitol dehydrogenase which mostly produces D-arabinitol in haustoria, the appendages of the parasitic fungus that penetrate the host's tissue and draws nutrients from it. D-arabinitol accumulation may serve as a carbohydrate storage compound. D-arabinitol is also capable of quenching reactive oxygen species involved in host plant defense reactions, thus providing protection for the rust fungus during the pathogenic interaction. This chain is D-arabinitol dehydrogenase 1 (ARD1), found in Uromyces fabae (Rust fungus).